The sequence spans 258 residues: MDLLVAHGGDPAGSNMARYLAEGMEPDGKIWHGRHFDLVIIDSPAISADWIGGEYEYDGYVFLSRHGAESGKLALTCHSTGNFAEAQFGGSDREVAIPYPGFQRRYMRRLSERREKFNGFDITIEATHHGPTGLDKPSIFVEVGTTEKQWNDKGLCGAVAELVRETAEEQDEKTPFVICVGGTHYPEKFTDVLLKGEYALGTVVPKRALVNLDDKMFSHILERNAGAAAVLVDEGGLGPEKRRILNMLEGSGLEVISA.

Belongs to the DtdA deacylase family. In terms of assembly, monomer. Zn(2+) serves as cofactor.

The catalysed reaction is a D-aminoacyl-tRNA + H2O = a tRNA + a D-alpha-amino acid + H(+). It catalyses the reaction glycyl-tRNA(Ala) + H2O = tRNA(Ala) + glycine + H(+). Its function is as follows. D-aminoacyl-tRNA deacylase with broad substrate specificity. By recycling D-aminoacyl-tRNA to D-amino acids and free tRNA molecules, this enzyme counteracts the toxicity associated with the formation of D-aminoacyl-tRNA entities in vivo. This chain is D-aminoacyl-tRNA deacylase, found in Cenarchaeum symbiosum (strain A).